The primary structure comprises 287 residues: ATP synthase gamma chain (287 aa).

It belongs to the ATPase gamma chain family. F-type ATPases have 2 components, CF(1) - the catalytic core - and CF(0) - the membrane proton channel. CF(1) has five subunits: alpha(3), beta(3), gamma(1), delta(1), epsilon(1). CF(0) has three main subunits: a, b and c.

It localises to the cell membrane. Its function is as follows. Produces ATP from ADP in the presence of a proton gradient across the membrane. The gamma chain is believed to be important in regulating ATPase activity and the flow of protons through the CF(0) complex. In Mycoplasmopsis agalactiae (strain NCTC 10123 / CIP 59.7 / PG2) (Mycoplasma agalactiae), this protein is ATP synthase gamma chain.